Reading from the N-terminus, the 182-residue chain is Large ribosomal subunit protein uL5 (182 aa).

Belongs to the universal ribosomal protein uL5 family. As to quaternary structure, part of the 50S ribosomal subunit; part of the 5S rRNA/L5/L18/L25 subcomplex. Contacts the 5S rRNA and the P site tRNA. Forms a bridge to the 30S subunit in the 70S ribosome.

Functionally, this is one of the proteins that bind and probably mediate the attachment of the 5S RNA into the large ribosomal subunit, where it forms part of the central protuberance. In the 70S ribosome it contacts protein S13 of the 30S subunit (bridge B1b), connecting the 2 subunits; this bridge is implicated in subunit movement. Contacts the P site tRNA; the 5S rRNA and some of its associated proteins might help stabilize positioning of ribosome-bound tRNAs. The polypeptide is Large ribosomal subunit protein uL5 (Coxiella burnetii (strain CbuG_Q212) (Coxiella burnetii (strain Q212))).